A 441-amino-acid polypeptide reads, in one-letter code: Ribosomal protein uS12 methylthiotransferase RimO (441 aa).

The MTTase N-terminal domain maps to 8-118; that stretch reads PKIGFVSLGC…VLEHVHHYVP (111 aa). Positions 17, 53, 82, 150, 154, and 157 each coordinate [4Fe-4S] cluster. One can recognise a Radical SAM core domain in the interval 136-373; the sequence is LTPRHYAYLK…MQLQQQISAE (238 aa). Residues 376 to 441 enclose the TRAM domain; sequence QEKVGKEILV…DEYDLWGSRV (66 aa).

It belongs to the methylthiotransferase family. RimO subfamily. Requires [4Fe-4S] cluster as cofactor.

The protein resides in the cytoplasm. The catalysed reaction is L-aspartate(89)-[ribosomal protein uS12]-hydrogen + (sulfur carrier)-SH + AH2 + 2 S-adenosyl-L-methionine = 3-methylsulfanyl-L-aspartate(89)-[ribosomal protein uS12]-hydrogen + (sulfur carrier)-H + 5'-deoxyadenosine + L-methionine + A + S-adenosyl-L-homocysteine + 2 H(+). Functionally, catalyzes the methylthiolation of an aspartic acid residue of ribosomal protein uS12. The sequence is that of Ribosomal protein uS12 methylthiotransferase RimO from Escherichia fergusonii (strain ATCC 35469 / DSM 13698 / CCUG 18766 / IAM 14443 / JCM 21226 / LMG 7866 / NBRC 102419 / NCTC 12128 / CDC 0568-73).